A 224-amino-acid chain; its full sequence is MTSFGIIVFPGSNCDRDIATVTAGLLDQPTRFIWHQETDLHGVDVVVLPGGFSYGDYLRCGAIARFSPIMTAIIDHANAGKRVLGICNGFQVLTEVGLLPGALIRNRDLHFICDRVTVRVESNQTVWTKGYQSQQVITLPIAHGEGRYFADGDTLKALEDNEQILFRYSNAQGELTTDSNPNGSLHNIAGITNVQGNVLGMMPHPERAADRLLKATDGLAMFIS.

Residues 4–224 (FGIIVFPGSN…ATDGLAMFIS (221 aa)) enclose the Glutamine amidotransferase type-1 domain. Cys-87 functions as the Nucleophile in the catalytic mechanism. Catalysis depends on residues His-204 and Glu-206.

In terms of assembly, part of the FGAM synthase complex composed of 1 PurL, 1 PurQ and 2 PurS subunits.

It is found in the cytoplasm. It carries out the reaction N(2)-formyl-N(1)-(5-phospho-beta-D-ribosyl)glycinamide + L-glutamine + ATP + H2O = 2-formamido-N(1)-(5-O-phospho-beta-D-ribosyl)acetamidine + L-glutamate + ADP + phosphate + H(+). It catalyses the reaction L-glutamine + H2O = L-glutamate + NH4(+). It functions in the pathway purine metabolism; IMP biosynthesis via de novo pathway; 5-amino-1-(5-phospho-D-ribosyl)imidazole from N(2)-formyl-N(1)-(5-phospho-D-ribosyl)glycinamide: step 1/2. Its function is as follows. Part of the phosphoribosylformylglycinamidine synthase complex involved in the purines biosynthetic pathway. Catalyzes the ATP-dependent conversion of formylglycinamide ribonucleotide (FGAR) and glutamine to yield formylglycinamidine ribonucleotide (FGAM) and glutamate. The FGAM synthase complex is composed of three subunits. PurQ produces an ammonia molecule by converting glutamine to glutamate. PurL transfers the ammonia molecule to FGAR to form FGAM in an ATP-dependent manner. PurS interacts with PurQ and PurL and is thought to assist in the transfer of the ammonia molecule from PurQ to PurL. The protein is Phosphoribosylformylglycinamidine synthase subunit PurQ of Synechocystis sp. (strain ATCC 27184 / PCC 6803 / Kazusa).